Here is a 77-residue protein sequence, read N- to C-terminus: Liver-expressed antimicrobial peptide 2 (77 aa).

The signal sequence occupies residues 1–22 (MWHLKLFAVLMICLLLLAQVDG). Residues 23-37 (SPIPQQSSAKRRPRR) constitute a propeptide that is removed on maturation. 2 disulfides stabilise this stretch: Cys-54/Cys-65 and Cys-60/Cys-70.

Belongs to the LEAP2 family.

It is found in the secreted. Its function is as follows. Has an antimicrobial activity. The chain is Liver-expressed antimicrobial peptide 2 (LEAP2) from Bos taurus (Bovine).